The chain runs to 336 residues: Biotin synthase (336 aa).

In terms of domain architecture, Radical SAM core spans 36-263 (TKVQISTLLS…ESHVRLAAGR (228 aa)). [4Fe-4S] cluster contacts are provided by C51, C55, and C58. 4 residues coordinate [2Fe-2S] cluster: C95, C126, C186, and R258.

Belongs to the radical SAM superfamily. Biotin synthase family. In terms of assembly, homodimer. The cofactor is [4Fe-4S] cluster. [2Fe-2S] cluster is required as a cofactor.

The catalysed reaction is (4R,5S)-dethiobiotin + (sulfur carrier)-SH + 2 reduced [2Fe-2S]-[ferredoxin] + 2 S-adenosyl-L-methionine = (sulfur carrier)-H + biotin + 2 5'-deoxyadenosine + 2 L-methionine + 2 oxidized [2Fe-2S]-[ferredoxin]. Its pathway is cofactor biosynthesis; biotin biosynthesis; biotin from 7,8-diaminononanoate: step 2/2. Functionally, catalyzes the conversion of dethiobiotin (DTB) to biotin by the insertion of a sulfur atom into dethiobiotin via a radical-based mechanism. The chain is Biotin synthase from Gluconobacter oxydans (strain 621H) (Gluconobacter suboxydans).